Here is a 439-residue protein sequence, read N- to C-terminus: Cobyrinate a,c-diamide synthase (439 aa).

Residues 238–431 form the GATase cobBQ-type domain; it reads KIAVAYDKAF…AHVNFLGNIE (194 aa). Catalysis depends on C320, which acts as the Nucleophile.

The protein belongs to the CobB/CbiA family. Requires Mg(2+) as cofactor.

The enzyme catalyses cob(II)yrinate + 2 L-glutamine + 2 ATP + 2 H2O = cob(II)yrinate a,c diamide + 2 L-glutamate + 2 ADP + 2 phosphate + 2 H(+). The protein operates within cofactor biosynthesis; adenosylcobalamin biosynthesis; cob(II)yrinate a,c-diamide from sirohydrochlorin (anaerobic route): step 10/10. Its function is as follows. Catalyzes the ATP-dependent amidation of the two carboxylate groups at positions a and c of cobyrinate, using either L-glutamine or ammonia as the nitrogen source. The polypeptide is Cobyrinate a,c-diamide synthase (Clostridium tetani (strain Massachusetts / E88)).